The primary structure comprises 153 residues: MSIPFSNTHYRIPQGFGNLLEGLTREILREQPDNIPAFAAAYFENLLEKREKTNFDPAEWGAKIDDRFYNNHAFKVPSGATESKEAPPEKSEPEKETPQEVVKEQETQVSFVEEVSTDDEEAAAAAVKIQAAFRGHKARKEVKIMKESSIEEQ.

The interval phenylalanine 74–threonine 117 is disordered. Residues glutamate 82–glutamate 106 are compositionally biased toward basic and acidic residues. In terms of domain architecture, IQ spans alanine 122–glutamate 151.

In terms of assembly, homodimer. May interact with ROPN1. Testis- and sperm-specific.

The protein localises to the membrane. Functionally, sperm surface zona pellucida binding protein. Helps to bind spermatozoa to the zona pellucida with high affinity. Might function in binding zona pellucida and carbohydrates. The chain is Sperm surface protein Sp17 (SPA17) from Notamacropus eugenii (Tammar wallaby).